A 111-amino-acid polypeptide reads, in one-letter code: Small ribosomal subunit protein bS16 (111 aa).

A disordered region spans residues 92-111; sequence MDVKAKNRKARSSKQEAKEA.

It belongs to the bacterial ribosomal protein bS16 family.

The protein is Small ribosomal subunit protein bS16 of Rickettsia akari (strain Hartford).